Here is a 284-residue protein sequence, read N- to C-terminus: tRNA uridine(34) hydroxylase (284 aa).

The Rhodanese domain maps to Ala-132–Tyr-226. Residue Cys-186 is the Cysteine persulfide intermediate of the active site.

The protein belongs to the TrhO family.

It catalyses the reaction uridine(34) in tRNA + AH2 + O2 = 5-hydroxyuridine(34) in tRNA + A + H2O. In terms of biological role, catalyzes oxygen-dependent 5-hydroxyuridine (ho5U) modification at position 34 in tRNAs. The protein is tRNA uridine(34) hydroxylase of Burkholderia ambifaria (strain MC40-6).